Reading from the N-terminus, the 180-residue chain is NADH-quinone oxidoreductase subunit I (180 aa).

2 consecutive 4Fe-4S ferredoxin-type domains span residues 48–80 (IVLT…LQKA) and 90–119 (EFFR…LTPD). [4Fe-4S] cluster-binding residues include Cys-60, Cys-63, Cys-66, Cys-70, Cys-99, Cys-102, Cys-105, and Cys-109. A disordered region spans residues 160-180 (GKPKGSAQKEAAPIDVKSILP).

It belongs to the complex I 23 kDa subunit family. NDH-1 is composed of 14 different subunits. Subunits NuoA, H, J, K, L, M, N constitute the membrane sector of the complex. [4Fe-4S] cluster serves as cofactor.

Its subcellular location is the cell inner membrane. It catalyses the reaction a quinone + NADH + 5 H(+)(in) = a quinol + NAD(+) + 4 H(+)(out). Its function is as follows. NDH-1 shuttles electrons from NADH, via FMN and iron-sulfur (Fe-S) centers, to quinones in the respiratory chain. The immediate electron acceptor for the enzyme in this species is believed to be ubiquinone. Couples the redox reaction to proton translocation (for every two electrons transferred, four hydrogen ions are translocated across the cytoplasmic membrane), and thus conserves the redox energy in a proton gradient. The chain is NADH-quinone oxidoreductase subunit I from Tolumonas auensis (strain DSM 9187 / NBRC 110442 / TA 4).